A 445-amino-acid chain; its full sequence is Argininosuccinate synthase (445 aa).

ATP is bound by residues 17–25 and Ala43; that span reads AFSGGLDTS. Tyr99 serves as a coordination point for L-citrulline. Positions 129 and 131 each coordinate ATP. L-aspartate is bound by residues Thr131, Asn135, and Asp136. Asn135 provides a ligand contact to L-citrulline. Asp136 provides a ligand contact to ATP. Residues Arg139 and Ser192 each contribute to the L-citrulline site. Asp194 contacts ATP. L-citrulline contacts are provided by Thr201, Glu203, and Glu280.

The protein belongs to the argininosuccinate synthase family. Type 2 subfamily. As to quaternary structure, homotetramer.

It is found in the cytoplasm. The enzyme catalyses L-citrulline + L-aspartate + ATP = 2-(N(omega)-L-arginino)succinate + AMP + diphosphate + H(+). It functions in the pathway amino-acid biosynthesis; L-arginine biosynthesis; L-arginine from L-ornithine and carbamoyl phosphate: step 2/3. The sequence is that of Argininosuccinate synthase from Burkholderia ambifaria (strain ATCC BAA-244 / DSM 16087 / CCUG 44356 / LMG 19182 / AMMD) (Burkholderia cepacia (strain AMMD)).